Here is a 217-residue protein sequence, read N- to C-terminus: 3-demethoxyubiquinol 3-hydroxylase (217 aa).

Fe cation-binding residues include Glu-66, Glu-96, His-99, Glu-148, Glu-180, and His-183.

This sequence belongs to the COQ7 family. The cofactor is Fe cation.

Its subcellular location is the cell membrane. It catalyses the reaction a 5-methoxy-2-methyl-3-(all-trans-polyprenyl)benzene-1,4-diol + AH2 + O2 = a 3-demethylubiquinol + A + H2O. It participates in cofactor biosynthesis; ubiquinone biosynthesis. Its function is as follows. Catalyzes the hydroxylation of 2-nonaprenyl-3-methyl-6-methoxy-1,4-benzoquinol during ubiquinone biosynthesis. The protein is 3-demethoxyubiquinol 3-hydroxylase of Xylella fastidiosa (strain 9a5c).